A 264-amino-acid polypeptide reads, in one-letter code: Thymidylate synthase (264 aa).

Residue arginine 21 coordinates dUMP. (6R)-5,10-methylene-5,6,7,8-tetrahydrofolate is bound at residue histidine 51. 126–127 (RR) provides a ligand contact to dUMP. Cysteine 146 acts as the Nucleophile in catalysis. Residues 166 to 169 (RSAD), asparagine 177, and 207 to 209 (HLY) contribute to the dUMP site. Aspartate 169 is a binding site for (6R)-5,10-methylene-5,6,7,8-tetrahydrofolate. Alanine 263 contacts (6R)-5,10-methylene-5,6,7,8-tetrahydrofolate.

Belongs to the thymidylate synthase family. Bacterial-type ThyA subfamily. Homodimer.

The protein resides in the cytoplasm. It catalyses the reaction dUMP + (6R)-5,10-methylene-5,6,7,8-tetrahydrofolate = 7,8-dihydrofolate + dTMP. Its pathway is pyrimidine metabolism; dTTP biosynthesis. Functionally, catalyzes the reductive methylation of 2'-deoxyuridine-5'-monophosphate (dUMP) to 2'-deoxythymidine-5'-monophosphate (dTMP) while utilizing 5,10-methylenetetrahydrofolate (mTHF) as the methyl donor and reductant in the reaction, yielding dihydrofolate (DHF) as a by-product. This enzymatic reaction provides an intracellular de novo source of dTMP, an essential precursor for DNA biosynthesis. This chain is Thymidylate synthase, found in Allorhizobium ampelinum (strain ATCC BAA-846 / DSM 112012 / S4) (Agrobacterium vitis (strain S4)).